Consider the following 489-residue polypeptide: Betaine aldehyde dehydrogenase (489 aa).

Residues threonine 26 and aspartate 93 each contribute to the K(+) site. 150 to 152 (GAW) contacts NAD(+). Lysine 162 acts as the Charge relay system in catalysis. NAD(+) is bound at residue 176-179 (KPSE). Valine 180 contributes to the K(+) binding site. 229 to 232 (GVET) provides a ligand contact to NAD(+). Leucine 245 is a K(+) binding site. The active-site Proton acceptor is glutamate 251. Residues glycine 253, cysteine 285, and glutamate 386 each coordinate NAD(+). The active-site Nucleophile is cysteine 285. At cysteine 285 the chain carries Cysteine sulfenic acid (-SOH). Residues lysine 456 and glycine 459 each coordinate K(+). Catalysis depends on glutamate 463, which acts as the Charge relay system.

This sequence belongs to the aldehyde dehydrogenase family. In terms of assembly, dimer of dimers. The cofactor is K(+).

It catalyses the reaction betaine aldehyde + NAD(+) + H2O = glycine betaine + NADH + 2 H(+). Its pathway is amine and polyamine biosynthesis; betaine biosynthesis via choline pathway; betaine from betaine aldehyde: step 1/1. Its function is as follows. Involved in the biosynthesis of the osmoprotectant glycine betaine. Catalyzes the irreversible oxidation of betaine aldehyde to the corresponding acid. This chain is Betaine aldehyde dehydrogenase, found in Burkholderia pseudomallei (strain 1106a).